We begin with the raw amino-acid sequence, 396 residues long: Cystathionine beta-lyase (396 aa).

Lys-211 bears the N6-(pyridoxal phosphate)lysine mark.

The protein belongs to the trans-sulfuration enzymes family. In terms of assembly, homotetramer. Pyridoxal 5'-phosphate is required as a cofactor.

The protein resides in the cytoplasm. It carries out the reaction L,L-cystathionine + H2O = L-homocysteine + pyruvate + NH4(+). The enzyme catalyses an S-substituted L-cysteine + H2O = a thiol + pyruvate + NH4(+). It participates in amino-acid biosynthesis; L-methionine biosynthesis via de novo pathway; L-homocysteine from L-cystathionine: step 1/1. Functionally, catalyzes the cleavage of cystathionine to homocysteine, pyruvate and ammonia during methionine biosynthesis. The protein is Cystathionine beta-lyase (metC) of Haemophilus influenzae (strain ATCC 51907 / DSM 11121 / KW20 / Rd).